Here is a 134-residue protein sequence, read N- to C-terminus: MAKSPANNAAQRVRKKVRKNISDGIAHVHASFNNTIITITDRQGNALSWASSGGQGFKGSRKSTPFAAQVASEVAGRAAIEQGIKNLDVEIKGPGPGRESSVRALGALGIRITSISDVTPVPHNGCRPQKRRRI.

The protein belongs to the universal ribosomal protein uS11 family. As to quaternary structure, part of the 30S ribosomal subunit. Interacts with proteins S7 and S18. Binds to IF-3.

In terms of biological role, located on the platform of the 30S subunit, it bridges several disparate RNA helices of the 16S rRNA. Forms part of the Shine-Dalgarno cleft in the 70S ribosome. The polypeptide is Small ribosomal subunit protein uS11 (Acidovorax ebreus (strain TPSY) (Diaphorobacter sp. (strain TPSY))).